The primary structure comprises 257 residues: Phosphonates import ATP-binding protein PhnC (257 aa).

The ABC transporter domain occupies 2-246 (IEFRNVSKVY…KFAEIYGDVV (245 aa)). ATP is bound at residue 35 to 42 (GLSGAGKS).

It belongs to the ABC transporter superfamily. Phosphonates importer (TC 3.A.1.9.1) family. The complex is composed of two ATP-binding proteins (PhnC), two transmembrane proteins (PhnE) and a solute-binding protein (PhnD).

The protein resides in the cell membrane. It catalyses the reaction phosphonate(out) + ATP + H2O = phosphonate(in) + ADP + phosphate + H(+). In terms of biological role, part of the ABC transporter complex PhnCDE involved in phosphonates import. Responsible for energy coupling to the transport system. In Bacillus anthracis, this protein is Phosphonates import ATP-binding protein PhnC.